The primary structure comprises 89 residues: Cell division topological specificity factor (89 aa).

The protein belongs to the MinE family.

Functionally, prevents the cell division inhibition by proteins MinC and MinD at internal division sites while permitting inhibition at polar sites. This ensures cell division at the proper site by restricting the formation of a division septum at the midpoint of the long axis of the cell. This chain is Cell division topological specificity factor, found in Laribacter hongkongensis (strain HLHK9).